A 385-amino-acid polypeptide reads, in one-letter code: Suppressor protein STP22 of temperature-sensitive alpha-factor receptor and arginine permease (385 aa).

Positions 12 to 161 constitute a UEV domain; the sequence is AVVNWLFKVI…LHEPPQDQAP (150 aa). Positions 155–219 are disordered; sequence PPQDQAPSLP…DMDNTDISPT (65 aa). Residues 168 to 177 are compositionally biased toward polar residues; that stretch reads NTQLQQEQNT. A compositionally biased stretch (pro residues) spans 178–201; the sequence is PPLPPKPKSPHLKPPLPPPPPPQP. A coiled-coil region spans residues 272–300; it reads LRAVEQAIEQTMHSLNAQIDVLTANRAKV. In terms of domain architecture, SB spans 322–385; it reads TDGLNQLYNL…HIQRITSPLS (64 aa).

It belongs to the ubiquitin-conjugating enzyme family. UEV subfamily. Component of the ESCRT-I complex (endosomal sorting complex required for transport I) which consists of STP22, VPS28, SRN2 and MVB12 in a 1:1:1:1 stoichiometry. Interacts with HSE1 and VPS27. Interacts with MVB12 and SRN2.

It localises to the cytoplasm. The protein localises to the endosome. It is found in the late endosome membrane. Its function is as follows. Component of the ESCRT-I complex, a regulator of vesicular trafficking process. Binds to ubiquitinated cargo proteins and is required for the sorting of endocytic ubiquitinated cargos into multivesicular bodies (MVBs). Mediates the association to the ESCRT-0 complex. Required for vacuolar targeting of temperature-sensitive plasma membrane proteins STE2 and CAN1. This Saccharomyces cerevisiae (strain ATCC 204508 / S288c) (Baker's yeast) protein is Suppressor protein STP22 of temperature-sensitive alpha-factor receptor and arginine permease (STP22).